The chain runs to 256 residues: Small ribosomal subunit protein eS1 (256 aa).

The span at 1–18 (MAVGKNKRLSKGKKGLKK) shows a compositional bias: basic residues. The tract at residues 1 to 20 (MAVGKNKRLSKGKKGLKKKA) is disordered. The residue at position 2 (Ala2) is an N-acetylalanine; partial.

It belongs to the eukaryotic ribosomal protein eS1 family. In terms of assembly, component of the small ribosomal subunit. Mature ribosomes consist of a small (40S) and a large (60S) subunit. The 40S subunit contains about 33 different proteins and 1 molecule of RNA (18S). The 60S subunit contains about 49 different proteins and 3 molecules of RNA (25S, 5.8S and 5S).

Its subcellular location is the cytoplasm. The polypeptide is Small ribosomal subunit protein eS1 (Podospora anserina (strain S / ATCC MYA-4624 / DSM 980 / FGSC 10383) (Pleurage anserina)).